Consider the following 350-residue polypeptide: Pleckstrin (350 aa).

A PH 1 domain is found at 4-101 (KRIREGYLVK…WVRDIKKAIK (98 aa)). Lys64 bears the N6-acetyllysine mark. Phosphoserine is present on residues Ser113 and Ser117. Residues 136–221 (PEKGIKELNL…NPDAFYYFPD (86 aa)) enclose the DEP domain. Residues 244–347 (IIIKQGCLLK…WIKAIQVASR (104 aa)) enclose the PH 2 domain.

Major protein kinase C substrate of platelets. This Rattus norvegicus (Rat) protein is Pleckstrin (Plek).